The chain runs to 256 residues: Trans-aconitate 2-methyltransferase (256 aa).

Belongs to the methyltransferase superfamily. Tam family.

It is found in the cytoplasm. It catalyses the reaction trans-aconitate + S-adenosyl-L-methionine = (E)-3-(methoxycarbonyl)pent-2-enedioate + S-adenosyl-L-homocysteine. Its function is as follows. Catalyzes the S-adenosylmethionine monomethyl esterification of trans-aconitate. This chain is Trans-aconitate 2-methyltransferase, found in Rhodopseudomonas palustris (strain BisB5).